The following is an 862-amino-acid chain: Solute carrier family 4 member 11 (862 aa).

Residues 1–343 (MSQNEHCQDS…IIGKSKSVGK (343 aa)) are Cytoplasmic-facing. The helical transmembrane segment at 344–366 (YVTTTLFLYFACLLPTIAFGSLN) threads the bilayer. Residues 367–379 (DENTNGAIDVQKT) lie on the Extracellular side of the membrane. Residues 380–393 (IAGQSIGGLLYALF) traverse the membrane as a helical segment. Residues 394-398 (SGQPL) are Cytoplasmic-facing. The chain crosses the membrane as a helical span at residues 399-415 (VILLTTAPLAIYTQVIR). The Extracellular portion of the chain corresponds to 416-428 (VICDDYNLDFNAF). Residues 429–452 (YAWTGLWNSFFLALYAFLNLSLLM) form a helical membrane-spanning segment. At 453–460 (NLFKRSTE) the chain is on the cytoplasmic side. Residues 461-481 (EIIALFISITFVLDAVKGMVK) form a helical membrane-spanning segment. Over 482–542 (IFGKYYYGHH…SSPGSTHSGQ (61 aa)) the chain is Extracellular. 2 N-linked (GlcNAc...) asparagine glycosylation sites follow: Asn511 and Asn519. The helical transmembrane segment at 543 to 564 (ATAVLSLLIMLGTLWLGYTLYQ) threads the bilayer. The Cytoplasmic segment spans residues 565-577 (FKKSPYLHPCVRE). A helical membrane pass occupies residues 578–599 (TLSDCALPIAVLSFSLIGSYGF). Over 600–627 (QEIEMSKFRYNPSESLFEVAQIHSLSFK) the chain is Extracellular. The chain crosses the membrane as a helical span at residues 628 to 645 (AIGSAMGLGFLLSLLFFI). Topologically, residues 646 to 670 (EQNLVAALVNAPENRLVKGTAYHWD) are cytoplasmic. The helical transmembrane segment at 671–691 (LLLLAIINTGLSLFGLPWIHA) threads the bilayer. Residues 692 to 721 (AYPHSPLHVRALALVEERVENGHIYETIVD) lie on the Extracellular side of the membrane. A helical transmembrane segment spans residues 722–746 (VKETRLTALGASVLVGLSLLLLPFP). Topologically, residues 747-752 (LQWIPK) are cytoplasmic. The helical transmembrane segment at 753–770 (PVLYGLFLYIALTSLDGN) threads the bilayer. Residues 771-774 (QLFS) are Extracellular-facing. The chain crosses the membrane as a helical span at residues 775-797 (RVALLLKEQTSYPPTHYIRRVPQ). Over 798 to 802 (RKIHY) the chain is Cytoplasmic. The chain crosses the membrane as a helical span at residues 803 to 819 (FTGLQILQLLLLCAFGM). Residues 820 to 823 (SSLP) are Extracellular-facing. The helical transmembrane segment at 824–844 (YMKMVFPLIMIAMIPIRYNLL) threads the bilayer. Topologically, residues 845–862 (PRIIEAKYLDVMDAEHRP) are cytoplasmic.

It belongs to the anion exchanger (TC 2.A.31) family. In terms of assembly, homodimer. In terms of processing, glycosylated. In terms of tissue distribution, expressed in the endothelial cells of the cornea. In the inner ear, is located in fibrocytes underlying the stria vascularis. In the kidney, is expressed in the thin descending limb of Henle loop.

It is found in the cell membrane. The protein localises to the basolateral cell membrane. It catalyses the reaction tetrahydroxoborate(in) + 2 Na(+)(in) = tetrahydroxoborate(out) + 2 Na(+)(out). Its function is as follows. Multifunctional transporter with an impact in cell morphology and differentiation. In the presence of borate B(OH)4(-), acts as a voltage-dependent electrogenic Na(+)-coupled B(OH)4(-) cotransporter controlling boron homeostasis. At early stages of stem cell differentiation, participates in synergy with ITGA5-ITGB1 and ITGAV-ITGB3 integrins and BMPR1A to promote cell adhesion and contractility that drives differentiation toward osteogenic commitment while inhibiting adipogenesis. In the absence of B(OH)4(-), acts as a Na(+)-coupled OH(-) or H(+) permeable channel with implications in cellular redox balance. Regulates the oxidative stress response in corneal endothelium by enhancing antioxidant defenses and protecting cells from reactive oxygen species. In response to hypo-osmotic challenge, also acts as water permeable channel at the basolateral cell membrane of corneal endothelial cells and facilitates transendothelial fluid reabsorption in the aqueous humor. In the presence of ammonia, acts as an electrogenic NH3/H(+) cotransporter and may play a role in ammonia transport and reabsorption in renal Henle's loop epithelium. The polypeptide is Solute carrier family 4 member 11 (Slc4a11) (Mus musculus (Mouse)).